Here is a 105-residue protein sequence, read N- to C-terminus: MSDLTRLASFARVGGRLFRSGRARTAGDGGVRHAGGGVHIEPRYRQFPQLTRSQVFQSEFFSGLMWFWILWRFWHDSEEVLGHFPYPDPSQWTDEELGIPPDDED.

The transit peptide at 1 to 33 (MSDLTRLASFARVGGRLFRSGRARTAGDGGVRH) directs the protein to the mitochondrion. The disordered stretch occupies residues 85 to 105 (PYPDPSQWTDEELGIPPDDED). Positions 93–105 (TDEELGIPPDDED) are enriched in acidic residues.

The protein belongs to the complex I NDUFB2 subunit family. In terms of assembly, complex I is composed of 45 different subunits.

Its subcellular location is the mitochondrion inner membrane. In terms of biological role, accessory subunit of the mitochondrial membrane respiratory chain NADH dehydrogenase (Complex I), that is believed not to be involved in catalysis. Complex I functions in the transfer of electrons from NADH to the respiratory chain. The immediate electron acceptor for the enzyme is believed to be ubiquinone. This is NADH dehydrogenase [ubiquinone] 1 beta subcomplex subunit 2, mitochondrial (NDUFB2) from Pan troglodytes (Chimpanzee).